The sequence spans 211 residues: ATP phosphoribosyltransferase (211 aa).

This sequence belongs to the ATP phosphoribosyltransferase family. Short subfamily. As to quaternary structure, heteromultimer composed of HisG and HisZ subunits.

The protein localises to the cytoplasm. The catalysed reaction is 1-(5-phospho-beta-D-ribosyl)-ATP + diphosphate = 5-phospho-alpha-D-ribose 1-diphosphate + ATP. It participates in amino-acid biosynthesis; L-histidine biosynthesis; L-histidine from 5-phospho-alpha-D-ribose 1-diphosphate: step 1/9. Its function is as follows. Catalyzes the condensation of ATP and 5-phosphoribose 1-diphosphate to form N'-(5'-phosphoribosyl)-ATP (PR-ATP). Has a crucial role in the pathway because the rate of histidine biosynthesis seems to be controlled primarily by regulation of HisG enzymatic activity. This chain is ATP phosphoribosyltransferase, found in Pseudomonas putida (strain W619).